The sequence spans 324 residues: Holliday junction branch migration complex subunit RuvB (324 aa).

The large ATPase domain (RuvB-L) stretch occupies residues 1 to 168 (MEDLALRPKT…FGIVEHLEYY (168 aa)). ATP-binding positions include L6, R7, G48, K51, T52, T53, 115-117 (EDF), R158, Y168, and R205. Residue T52 coordinates Mg(2+). Residues 169 to 239 (TPEELAQGVM…RALEALAALG (71 aa)) are small ATPAse domain (RuvB-S). The interval 242–324 (ELGLEKRDRE…PPPVGPLLEP (83 aa)) is head domain (RuvB-H). DNA is bound by residues R297 and R302.

The protein belongs to the RuvB family. In terms of assembly, homohexamer. Forms an RuvA(8)-RuvB(12)-Holliday junction (HJ) complex. HJ DNA is sandwiched between 2 RuvA tetramers; dsDNA enters through RuvA and exits via RuvB. An RuvB hexamer assembles on each DNA strand where it exits the tetramer. Each RuvB hexamer is contacted by two RuvA subunits (via domain III) on 2 adjacent RuvB subunits; this complex drives branch migration. In the full resolvosome a probable DNA-RuvA(4)-RuvB(12)-RuvC(2) complex forms which resolves the HJ.

It localises to the cytoplasm. The catalysed reaction is ATP + H2O = ADP + phosphate + H(+). The ATPase activity of RuvB is enhanced by RuvA. The RuvA-RuvB-RuvC complex processes Holliday junction (HJ) DNA during genetic recombination and DNA repair, while the RuvA-RuvB complex plays an important role in the rescue of blocked DNA replication forks via replication fork reversal (RFR). RuvA specifically binds to HJ cruciform DNA, conferring on it an open structure. The RuvB hexamer acts as an ATP-dependent pump, pulling dsDNA into and through the RuvAB complex. RuvB forms 2 homohexamers on either side of HJ DNA bound by 1 or 2 RuvA tetramers; 4 subunits per hexamer contact DNA at a time. Coordinated motions by a converter formed by DNA-disengaged RuvB subunits stimulates ATP hydrolysis and nucleotide exchange. Immobilization of the converter enables RuvB to convert the ATP-contained energy into a lever motion, pulling 2 nucleotides of DNA out of the RuvA tetramer per ATP hydrolyzed, thus driving DNA branch migration. The RuvB motors rotate together with the DNA substrate, which together with the progressing nucleotide cycle form the mechanistic basis for DNA recombination by continuous HJ branch migration. Branch migration allows RuvC to scan DNA until it finds its consensus sequence, where it cleaves and resolves cruciform DNA. Functionally, has Mg(2+)-, DNA-dependent ATPase activity; dsDNA and supercoiled DNA but not ssDNA stimulate activity. Binds to linear dsDNA in the absence of ATP or ATP-gamma-S. This subunit can promote Holliday junction migration alone in vitro. Partially complements an E.coli deletion for UV sensitivity. In Thermus thermophilus, this protein is Holliday junction branch migration complex subunit RuvB.